A 509-amino-acid polypeptide reads, in one-letter code: METVQMSLDLQPEDTKANIECSSPDYEIKCFSHNQFAPQIERLKIEKKYIHIVEETETFNRKLVSYQANKNQSIHNWIRYKEGFSSELVQNLIEEFGLSKGDTILDPFLGSGTTSLTAKMLGINSIGIDILPISHIAFEPKSFIFEYNLEELDRAYKEIYEISPTKIEQKFNHLSITEGAFPEETENDLLFFTHWDNNSQYSYQTKTLIKLILVSILEEISYTRKDGQYLRWDYRSQKVIETNKKRLEQGKEPIKTILDKGELPTVKESLLNTLLTIKEDIKEIQQKCLPNESVHELIKDSALNALPKINDNTFDAVITSPPYCNRYDYTRTYALELAYLGVDEKKIRELRQAQLSCTVENKSKLKQLKDYYHSLFLESRYAEIERLVTGNEVLNEINYALRKRWENGEVNNKGILSMVDGYFTELTFIFYELFRTCKPGAKVAFVNDNVRYAGEIIPVDFLSTKIAEDIGFKPIKIYTLKQRKGNSSQQMGKYGRVALRKSITIWEKP.

This sequence belongs to the N(4)/N(6)-methyltransferase family. N(4) subfamily.

The catalysed reaction is a 2'-deoxycytidine in DNA + S-adenosyl-L-methionine = an N(4)-methyl-2'-deoxycytidine in DNA + S-adenosyl-L-homocysteine + H(+). An alpha subtype methylase that recognizes the double-stranded sequence 5'-CYCGRG-3', methylates C-1 on both strands, and protects the DNA from cleavage by the BsoBI endonuclease. The chain is Type II methyltransferase M.BsoBI from Geobacillus stearothermophilus (Bacillus stearothermophilus).